A 140-amino-acid chain; its full sequence is Methylglyoxal synthase (140 aa).

The 140-residue stretch at 1 to 140 (MRSKPRIALI…DQAAADDAAP (140 aa)) folds into the MGS-like domain. Substrate-binding positions include His-12, Lys-16, 38-41 (TGTT), and 58-59 (SG). The active-site Proton donor/acceptor is Asp-64. His-91 contacts substrate.

It belongs to the methylglyoxal synthase family.

The catalysed reaction is dihydroxyacetone phosphate = methylglyoxal + phosphate. Functionally, catalyzes the formation of methylglyoxal from dihydroxyacetone phosphate. In Cupriavidus metallidurans (strain ATCC 43123 / DSM 2839 / NBRC 102507 / CH34) (Ralstonia metallidurans), this protein is Methylglyoxal synthase.